Reading from the N-terminus, the 251-residue chain is Cholesterol 25-hydroxylase-like protein (251 aa).

3 consecutive transmembrane segments (helical) span residues 22–42 (FFPV…FVLL), 69–89 (WSCL…LSVL), and 108–128 (VVWD…VWHL). Residues 113–247 (AACLLLFDFQ…FTHWDKLFGT (135 aa)) enclose the Fatty acid hydroxylase domain. Residues 126 to 130 (WHLLH) carry the Histidine box-1 motif. The short motif at 141–145 (HKVHH) is the Histidine box-2 element. A Histidine box-3 motif is present at residues 222 to 228 (HHDVHHQ).

This sequence belongs to the sterol desaturase family. The cofactor is Fe cation.

Its subcellular location is the endoplasmic reticulum membrane. The catalysed reaction is cholesterol + AH2 + O2 = 25-hydroxycholesterol + A + H2O. The enzyme catalyses cholesterol + NADPH + O2 + H(+) = 25-hydroxycholesterol + NADP(+) + H2O. Its function is as follows. Catalyzes the formation of 25-hydroxycholesterol from cholesterol, leading to repress cholesterol biosynthetic enzymes. Plays a key role in cell positioning and movement in lymphoid tissues: 25-hydroxycholesterol is an intermediate in biosynthesis of 7-alpha,25-dihydroxycholesterol (7-alpha,25-OHC), an oxysterol that acts as a ligand for the G protein-coupled receptor GPR183/EBI2, a chemotactic receptor for a number of lymphoid cells. May play an important role in regulating lipid metabolism by synthesizing a corepressor that blocks sterol regulatory element binding protein (SREBP) processing. In testis, production of 25-hydroxycholesterol by macrophages may play a role in Leydig cell differentiation. This Danio rerio (Zebrafish) protein is Cholesterol 25-hydroxylase-like protein (ch25h).